A 240-amino-acid polypeptide reads, in one-letter code: LexA repressor (240 aa).

The H-T-H motif DNA-binding region spans phenylalanine 26–threonine 46. Catalysis depends on for autocatalytic cleavage activity residues serine 161 and lysine 199.

Belongs to the peptidase S24 family. As to quaternary structure, homodimer.

The catalysed reaction is Hydrolysis of Ala-|-Gly bond in repressor LexA.. Represses a number of genes involved in the response to DNA damage (SOS response), including recA and lexA. In the presence of single-stranded DNA, RecA interacts with LexA causing an autocatalytic cleavage which disrupts the DNA-binding part of LexA, leading to derepression of the SOS regulon and eventually DNA repair. This Methylobacterium nodulans (strain LMG 21967 / CNCM I-2342 / ORS 2060) protein is LexA repressor.